The sequence spans 206 residues: Small ribosomal subunit protein uS4 (206 aa).

Residues T96–K156 form the S4 RNA-binding domain.

The protein belongs to the universal ribosomal protein uS4 family. In terms of assembly, part of the 30S ribosomal subunit. Contacts protein S5. The interaction surface between S4 and S5 is involved in control of translational fidelity.

One of the primary rRNA binding proteins, it binds directly to 16S rRNA where it nucleates assembly of the body of the 30S subunit. Functionally, with S5 and S12 plays an important role in translational accuracy. In Shewanella putrefaciens (strain CN-32 / ATCC BAA-453), this protein is Small ribosomal subunit protein uS4.